We begin with the raw amino-acid sequence, 257 residues long: Indole-3-glycerol phosphate synthase (257 aa).

This sequence belongs to the TrpC family.

It catalyses the reaction 1-(2-carboxyphenylamino)-1-deoxy-D-ribulose 5-phosphate + H(+) = (1S,2R)-1-C-(indol-3-yl)glycerol 3-phosphate + CO2 + H2O. Its pathway is amino-acid biosynthesis; L-tryptophan biosynthesis; L-tryptophan from chorismate: step 4/5. In Chlorobium chlorochromatii (strain CaD3), this protein is Indole-3-glycerol phosphate synthase.